Reading from the N-terminus, the 270-residue chain is Putative phosphoenolpyruvate synthase regulatory protein (270 aa).

Residue 150–157 (GVSRSGKT) coordinates ADP.

This sequence belongs to the pyruvate, phosphate/water dikinase regulatory protein family. PSRP subfamily.

The enzyme catalyses [pyruvate, water dikinase] + ADP = [pyruvate, water dikinase]-phosphate + AMP + H(+). It catalyses the reaction [pyruvate, water dikinase]-phosphate + phosphate + H(+) = [pyruvate, water dikinase] + diphosphate. Functionally, bifunctional serine/threonine kinase and phosphorylase involved in the regulation of the phosphoenolpyruvate synthase (PEPS) by catalyzing its phosphorylation/dephosphorylation. This is Putative phosphoenolpyruvate synthase regulatory protein from Cupriavidus metallidurans (strain ATCC 43123 / DSM 2839 / NBRC 102507 / CH34) (Ralstonia metallidurans).